A 796-amino-acid chain; its full sequence is Vacuolar protein sorting-associated protein 35 (796 aa).

Serine 7 bears the Phosphoserine mark. 2 interaction with SNX3 regions span residues 25 to 44 (VQSFQMKRCLDKNKLMDALK) and 205 to 215 (DREKRERERQE). The segment at 438 to 796 (CYVLSNVLDY…EGPIYEGLIL (359 aa)) is interaction with SLC11A2. An interaction with IGF2R cytoplasmic domain region spans residues 500-693 (SDDPDQQYLI…DKNGEELHGG (194 aa)). Residues 776–796 (HLRSRRESPESEGPIYEGLIL) form a disordered region. Position 783 is a phosphoserine (serine 783). Residue tyrosine 791 is modified to Phosphotyrosine.

Belongs to the VPS35 family. As to quaternary structure, component of the heterotrimeric retromer cargo-selective complex (CSC), also described as vacuolar protein sorting subcomplex (VPS) formed by VPS26 (VPS26A or VPS26B), VPS29 and VPS35. The CSC has a highly elongated structure with VPS26 and VPS29 binding independently at opposite distal ends of VPS35 as central platform. The CSC is believed to associate with variable sorting nexins to form functionally distinct retromer complex variants. The originally described retromer complex (also called SNX-BAR retromer) is a pentamer containing the CSC and a heterodimeric membrane-deforming subcomplex formed between SNX1 or SNX2 and SNX5 or SNX6 (also called SNX-BAR subcomplex); the affinity between the respective CSC and SNX-BAR subcomplexes is low. The CSC associates with SNX3 to form a SNX3-retromer complex. The CSC associates with SNX27, the WASH complex and the SNX-BAR subcomplex to form the SNX27-retromer complex. Interacts with VPS26A, VPS29, VPS26B and LRRK2. Interacts with SNX1, SNX2, IGF2R, SNX3, GOLPH3, SLC11A2, WASHC2, FKBP15, WASHC1, EHD1. Interacts with MAGEL2; leading to recruitment of the TRIM27:MAGEL2 E3 ubiquitin ligase complex retromer-containing endosomes. Interacts with SORCS2. In terms of tissue distribution, detected in striatum (at protein level). Ubiquitous. Highly expressed in fat tissue, testis, brain, kidney, thymus, liver and pancreas, and at lower levels in heart, intestine and skeletal muscle. Detected in oocytes, pre-implantation embryos and at 6.5-12.5 dpc.

It is found in the cytoplasm. Its subcellular location is the membrane. The protein resides in the endosome. It localises to the early endosome. The protein localises to the late endosome. Functionally, acts as a component of the retromer cargo-selective complex (CSC). The CSC is believed to be the core functional component of retromer or respective retromer complex variants acting to prevent missorting of selected transmembrane cargo proteins into the lysosomal degradation pathway. The recruitment of the CSC to the endosomal membrane involves RAB7A and SNX3. The CSC seems to associate with the cytoplasmic domain of cargo proteins predominantly via VPS35; however, these interactions seem to be of low affinity and retromer SNX proteins may also contribute to cargo selectivity thus questioning the classical function of the CSC. The SNX-BAR retromer mediates retrograde transport of cargo proteins from endosomes to the trans-Golgi network (TGN) and is involved in endosome-to-plasma membrane transport for cargo protein recycling. The SNX3-retromer mediates the retrograde transport of WLS distinct from the SNX-BAR retromer pathway. The SNX27-retromer is believed to be involved in endosome-to-plasma membrane trafficking and recycling of a broad spectrum of cargo proteins. The CSC seems to act as recruitment hub for other proteins, such as the WASH complex and TBC1D5. Required for retrograde transport of lysosomal enzyme receptor IGF2R and SLC11A2. Required to regulate transcytosis of the polymeric immunoglobulin receptor (pIgR-pIgA). Required for endosomal localization of WASHC2 and mediates the association of the CSC with the WASH complex. The protein is Vacuolar protein sorting-associated protein 35 (Vps35) of Mus musculus (Mouse).